A 763-amino-acid polypeptide reads, in one-letter code: MAP7 domain-containing protein 2 (763 aa).

Positions 1–11 (MERSGGNGAGA) are enriched in gly residues. Disordered stretches follow at residues 1–72 (MERS…REKC), 102–127 (LEEQRQREDQKRAAVEEKRKQKLREE), and 140–531 (ERTQ…KAMI). A compositionally biased stretch (low complexity) spans 12–31 (RAGAPSEGAAKGSSLLSAKS). Over residues 53–72 (LKSDERQRLAKERREEREKC) the composition is skewed to basic and acidic residues. Polar residues-rich tracts occupy residues 184–212 (PSDTGTATAAAESTNACDKLSTSTMNLPK) and 241–251 (LKSSYKSSPTR). Positions 312-321 (KRSSSPVKSK) are enriched in low complexity. 3 stretches are compositionally biased toward basic and acidic residues: residues 354–372 (ETLKKKAEKEKSNKEKEGA), 381–420 (PREETLEKPMADKDATEKYVADKHATEKHSATGGKAEHSA), and 437–531 (LAEK…KAMI). Positions 434 to 575 (AKILAEKRRQ…QERLERKKRI (142 aa)) form a coiled coil.

Belongs to the MAP7 family. Interacts (via N-terminus) with microtubules; facilitates microtubule stabilization. Interacts with kinesin-1 family members, KIF5A, KIF5B and KIF5C. In terms of tissue distribution, detected only in the brain and testis (at the protein level).

It is found in the cytoplasm. Its subcellular location is the cytoskeleton. The protein resides in the microtubule organizing center. The protein localises to the centrosome. It localises to the cell projection. It is found in the axon. Microtubule-stabilizing protein involved in the control of cell motility and neurite outgrowth. Acts as a critical cofactor for kinesin transport; in the proximal axon regulates kinesin-1 family members, KIF5A, KIF5B and KIF5C recruitment to microtubules and contributes to kinesin-1-mediated transport in the axons. In Rattus norvegicus (Rat), this protein is MAP7 domain-containing protein 2 (Map7d2).